The sequence spans 304 residues: Aspartate carbamoyltransferase catalytic subunit (304 aa).

Carbamoyl phosphate is bound by residues arginine 56 and threonine 57. Lysine 85 is an L-aspartate binding site. Carbamoyl phosphate-binding residues include arginine 106, histidine 134, and glutamine 137. Residues arginine 167 and arginine 226 each coordinate L-aspartate. Leucine 265 and proline 266 together coordinate carbamoyl phosphate.

Belongs to the aspartate/ornithine carbamoyltransferase superfamily. ATCase family. Heterooligomer of catalytic and regulatory chains.

It carries out the reaction carbamoyl phosphate + L-aspartate = N-carbamoyl-L-aspartate + phosphate + H(+). It functions in the pathway pyrimidine metabolism; UMP biosynthesis via de novo pathway; (S)-dihydroorotate from bicarbonate: step 2/3. Functionally, catalyzes the condensation of carbamoyl phosphate and aspartate to form carbamoyl aspartate and inorganic phosphate, the committed step in the de novo pyrimidine nucleotide biosynthesis pathway. The chain is Aspartate carbamoyltransferase catalytic subunit from Picrophilus torridus (strain ATCC 700027 / DSM 9790 / JCM 10055 / NBRC 100828 / KAW 2/3).